Consider the following 50-residue polypeptide: Protein PndA (50 aa).

A helical membrane pass occupies residues 5-25 (TFLMMLIVICVTILCFVWMVR).

The protein belongs to the Hok/Gef family.

It localises to the cell inner membrane. Functionally, toxic component of a type I toxin-antitoxin (TA) system. When expressed is involved in cellular Mg(2+) release and degradation of stable RNA. The sequence is that of Protein PndA (pndA) from Escherichia coli.